Here is a 313-residue protein sequence, read N- to C-terminus: Aspartate carbamoyltransferase catalytic subunit (313 aa).

Residues Arg51 and Thr52 each coordinate carbamoyl phosphate. Lys80 contributes to the L-aspartate binding site. Positions 101, 129, and 132 each coordinate carbamoyl phosphate. Residues Arg162 and Arg224 each coordinate L-aspartate. Positions 263 and 264 each coordinate carbamoyl phosphate.

This sequence belongs to the aspartate/ornithine carbamoyltransferase superfamily. ATCase family. Heterododecamer (2C3:3R2) of six catalytic PyrB chains organized as two trimers (C3), and six regulatory PyrI chains organized as three dimers (R2).

The enzyme catalyses carbamoyl phosphate + L-aspartate = N-carbamoyl-L-aspartate + phosphate + H(+). The protein operates within pyrimidine metabolism; UMP biosynthesis via de novo pathway; (S)-dihydroorotate from bicarbonate: step 2/3. Its function is as follows. Catalyzes the condensation of carbamoyl phosphate and aspartate to form carbamoyl aspartate and inorganic phosphate, the committed step in the de novo pyrimidine nucleotide biosynthesis pathway. This chain is Aspartate carbamoyltransferase catalytic subunit, found in Phocaeicola vulgatus (strain ATCC 8482 / DSM 1447 / JCM 5826 / CCUG 4940 / NBRC 14291 / NCTC 11154) (Bacteroides vulgatus).